Reading from the N-terminus, the 106-residue chain is Nucleoid-associated protein XC_3243 (106 aa).

The tract at residues 82-106 is disordered; the sequence is DAESKERMGSATAGMQLPPGMKLPF.

Belongs to the YbaB/EbfC family. As to quaternary structure, homodimer.

It localises to the cytoplasm. Its subcellular location is the nucleoid. Binds to DNA and alters its conformation. May be involved in regulation of gene expression, nucleoid organization and DNA protection. This chain is Nucleoid-associated protein XC_3243, found in Xanthomonas campestris pv. campestris (strain 8004).